The chain runs to 561 residues: Arginine--tRNA ligase (561 aa).

The short motif at 129-139 is the 'HIGH' region element; it reads ANPTGPLHVGH.

Belongs to the class-I aminoacyl-tRNA synthetase family. Monomer.

It localises to the cytoplasm. It carries out the reaction tRNA(Arg) + L-arginine + ATP = L-arginyl-tRNA(Arg) + AMP + diphosphate. In Polaromonas sp. (strain JS666 / ATCC BAA-500), this protein is Arginine--tRNA ligase.